Here is a 257-residue protein sequence, read N- to C-terminus: Dihydroorotate dehydrogenase B (NAD(+)), electron transfer subunit (257 aa).

An FAD-binding FR-type domain is found at 2 to 102; that stretch reads IGRERMTVVS…LGPLGHGFPL (101 aa). Residues 53–56, 70–72, and 77–78 each bind FAD; these read RPLS, IYR, and GT. The [2Fe-2S] cluster site is built by Cys-221, Cys-226, Cys-229, and Cys-244.

It belongs to the PyrK family. Heterotetramer of 2 PyrK and 2 PyrD type B subunits. [2Fe-2S] cluster is required as a cofactor. It depends on FAD as a cofactor.

It functions in the pathway pyrimidine metabolism; UMP biosynthesis via de novo pathway; orotate from (S)-dihydroorotate (NAD(+) route): step 1/1. Functionally, responsible for channeling the electrons from the oxidation of dihydroorotate from the FMN redox center in the PyrD type B subunit to the ultimate electron acceptor NAD(+). The chain is Dihydroorotate dehydrogenase B (NAD(+)), electron transfer subunit from Geobacillus thermodenitrificans (strain NG80-2).